A 244-amino-acid polypeptide reads, in one-letter code: Ribosomal RNA small subunit methyltransferase NEP1 (244 aa).

The interval 1-33 (MSAASGGFQPRERRFSVQEQDWETTPPKKLRLG) is disordered. Residues S5 and S16 each carry the phosphoserine modification. S-adenosyl-L-methionine contacts are provided by residues T176, G201, G206, and 219 to 224 (ISNYPL).

Belongs to the class IV-like SAM-binding methyltransferase superfamily. RNA methyltransferase NEP1 family. Homodimer. Part of the small subunit (SSU) processome, composed of more than 70 proteins and the RNA chaperone small nucleolar RNA (snoRNA) U3.

Its subcellular location is the nucleus. The protein localises to the nucleolus. The enzyme catalyses pseudouridine(1248) in human 18S rRNA + S-adenosyl-L-methionine = N(1)-methylpseudouridine(1248) in human 18S rRNA + S-adenosyl-L-homocysteine + H(+). Its function is as follows. S-adenosyl-L-methionine-dependent pseudouridine N(1)-methyltransferase that methylates pseudouridine at position in 18S rRNA. Involved the biosynthesis of the hypermodified N1-methyl-N3-(3-amino-3-carboxypropyl) pseudouridine (m1acp3-Psi) conserved in eukaryotic 18S rRNA. Is not able to methylate uridine at this position. Also has an essential role in 40S ribosomal subunit biogenesis independent on its methyltransferase activity, facilitating the incorporation of ribosomal protein S19 during the formation of pre-ribosomes. Part of the small subunit (SSU) processome, first precursor of the small eukaryotic ribosomal subunit. During the assembly of the SSU processome in the nucleolus, many ribosome biogenesis factors, an RNA chaperone and ribosomal proteins associate with the nascent pre-rRNA and work in concert to generate RNA folding, modifications, rearrangements and cleavage as well as targeted degradation of pre-ribosomal RNA by the RNA exosome. This Mus musculus (Mouse) protein is Ribosomal RNA small subunit methyltransferase NEP1.